The sequence spans 151 residues: Myosin catalytic light chain, smooth muscle (151 aa).

Residue A1 is modified to N-acetylalanine. EF-hand domains lie at 6 to 41 (DRITECQEAFELFDRSAEGKVFLGQVGDILRALGQN), 83 to 118 (GSYEDFVEGLRVFDKENNGKIMGAELRHVLSTLGEK), and 119 to 151 (MSEEEVEESLLQGQQDPNGCIHYEEFSKYLLEG).

In terms of biological role, in molluscan muscle, calcium regulation is associated with myosin rather than with actin. Muscle myosin contains two types of light chains: the catalytic light chain, essential for ATPase activity, and the regulatory light chain, a calcium-binding protein responsible for Ca(2+) dependent binding and Ca(2+) dependent Mg-ATPase activity. The chain is Myosin catalytic light chain, smooth muscle from Halocynthia roretzi (Sea squirt).